Here is a 151-residue protein sequence, read N- to C-terminus: 3-hydroxyacyl-[acyl-carrier-protein] dehydratase FabZ (151 aa).

Histidine 57 is an active-site residue.

Belongs to the thioester dehydratase family. FabZ subfamily.

The protein localises to the cytoplasm. It carries out the reaction a (3R)-hydroxyacyl-[ACP] = a (2E)-enoyl-[ACP] + H2O. Involved in unsaturated fatty acids biosynthesis. Catalyzes the dehydration of short chain beta-hydroxyacyl-ACPs and long chain saturated and unsaturated beta-hydroxyacyl-ACPs. This is 3-hydroxyacyl-[acyl-carrier-protein] dehydratase FabZ from Synechococcus sp. (strain CC9605).